The sequence spans 551 residues: Glucan 1,4-alpha-maltotetraohydrolase (551 aa).

A signal peptide spans 1–21 (MSHILRAAVLAAVLLPFPALA). Ca(2+) is bound by residues Asp-22, Gln-23, His-34, Asp-37, and Glu-38. 99-100 (YF) is a binding site for substrate. Asn-137 is a Ca(2+) binding site. His-138 provides a ligand contact to substrate. An intrachain disulfide couples Cys-161 to Cys-171. Ca(2+)-binding residues include Asp-172 and Asp-175. Residue 177 to 181 (FIGGE) coordinates substrate. Asp-183 is a Ca(2+) binding site. Residue Arg-212 coordinates substrate. The active-site Nucleophile is Asp-214. Residue Gly-218 coordinates Ca(2+). Cys-237 and Cys-272 form a disulfide bridge. The Proton donor role is filled by Glu-240. Residues His-314 and Gln-326 each coordinate substrate. A CBM20 domain is found at 449–551 (GGEGGLVNVN…AAGASTSGSF (103 aa)).

It belongs to the glycosyl hydrolase 13 family. In terms of assembly, monomer. It depends on Ca(2+) as a cofactor.

Its subcellular location is the secreted. The catalysed reaction is Hydrolysis of (1-&gt;4)-alpha-D-glucosidic linkages in amylaceous polysaccharides, to remove successive maltotetraose residues from the non-reducing chain ends.. Its pathway is glycan degradation; starch degradation. The polypeptide is Glucan 1,4-alpha-maltotetraohydrolase (mta) (Roseateles saccharophilus (Pseudomonas saccharophila)).